Here is a 387-residue protein sequence, read N- to C-terminus: MDLFEYQAKELFAKHNVPTTPGRVTESAEDAKAIAEEIGKPVMVKAQVKVGGRGKAGGVKYAATPEDALTHAQNILGLDIKGHIVKKLLVAEASDIAEEYYISFLLDRANRTYLAMCSVEGGMEIEEVAATKPERLAKVPVDAVKGVDEAFAREIAEKGHLPAEVLDAAAVTIAKLWEVFVKEDATLVEVNPLVRTPDDQILALDGKVTLDANADFRQPGHAEFEDKDATDPLELKAKENDLNYVKLDGAVGIIGNGAGLVMSTLDVVAYAGEKHGGVKPANFLDIGGGASAEVMAAGLDVILNDSQVKSVFVNVFGGITACDAVANGIVKALEILGDEANKPLVVRLDGNNVEEGRRILSEANHPLVIQADTMDSGADKAAELANK.

Residues 9 to 236 enclose the ATP-grasp domain; the sequence is KELFAKHNVP…KDATDPLELK (228 aa). ATP-binding positions include Lys-45, 52–54, Ser-94, and Glu-99; that span reads GRG. Mg(2+)-binding residues include Asn-191 and Asp-205. Substrate-binding positions include Asn-256 and 318 to 320; that span reads GIT.

Belongs to the succinate/malate CoA ligase beta subunit family. As to quaternary structure, heterotetramer of two alpha and two beta subunits. Mg(2+) serves as cofactor.

The catalysed reaction is succinate + ATP + CoA = succinyl-CoA + ADP + phosphate. It carries out the reaction GTP + succinate + CoA = succinyl-CoA + GDP + phosphate. Its pathway is carbohydrate metabolism; tricarboxylic acid cycle; succinate from succinyl-CoA (ligase route): step 1/1. Functionally, succinyl-CoA synthetase functions in the citric acid cycle (TCA), coupling the hydrolysis of succinyl-CoA to the synthesis of either ATP or GTP and thus represents the only step of substrate-level phosphorylation in the TCA. The beta subunit provides nucleotide specificity of the enzyme and binds the substrate succinate, while the binding sites for coenzyme A and phosphate are found in the alpha subunit. In Mycolicibacterium vanbaalenii (strain DSM 7251 / JCM 13017 / BCRC 16820 / KCTC 9966 / NRRL B-24157 / PYR-1) (Mycobacterium vanbaalenii), this protein is Succinate--CoA ligase [ADP-forming] subunit beta.